The chain runs to 310 residues: Nucleotide-binding protein BLA_1368 (310 aa).

Residues 1 to 21 are disordered; that stretch reads MQSARNEQRGTGPESPHAASP. 32–39 serves as a coordination point for ATP; it reads GMSGAGRS. 83–86 serves as a coordination point for GTP; the sequence is DVRS.

The protein belongs to the RapZ-like family.

In terms of biological role, displays ATPase and GTPase activities. This is Nucleotide-binding protein BLA_1368 from Bifidobacterium animalis subsp. lactis (strain AD011).